Consider the following 150-residue polypeptide: Large ribosomal subunit protein uL15 (150 aa).

The segment at methionine 1–glycine 55 is disordered. Over residues glutamine 8–lysine 32 the composition is skewed to basic and acidic residues.

The protein belongs to the universal ribosomal protein uL15 family. As to quaternary structure, part of the 50S ribosomal subunit.

Binds to the 23S rRNA. The sequence is that of Large ribosomal subunit protein uL15 from Bifidobacterium longum (strain NCC 2705).